Reading from the N-terminus, the 100-residue chain is Integration host factor subunit alpha (100 aa).

Residues 53–72 (FQLRDKPQRPGRNPKTGEEV) are disordered.

The protein belongs to the bacterial histone-like protein family. As to quaternary structure, heterodimer of an alpha and a beta chain.

In terms of biological role, this protein is one of the two subunits of integration host factor, a specific DNA-binding protein that functions in genetic recombination as well as in transcriptional and translational control. The polypeptide is Integration host factor subunit alpha (Neisseria meningitidis serogroup C (strain 053442)).